We begin with the raw amino-acid sequence, 640 residues long: EF-hand domain-containing protein 1 (640 aa).

The segment at Met1–Val45 is required for its localization in the mitotic spindle and interaction with alpha-tubulin. 3 consecutive DM10 domains span residues Asp93–Gly198, Asp239–Phe359, and Asp416–Ala520. The interval Val535 to Pro554 is disordered. A compositionally biased stretch (basic and acidic residues) spans Arg538–Pro554. Residues Ser574–Pro609 form the EF-hand domain.

As to quaternary structure, microtubule inner protein component of sperm flagellar doublet microtubules. Interacts with the C-terminus of CACNA1E. Interacts with alpha-tubulin. As to expression, widely expressed. Not detected in lymphocytes.

It is found in the cytoplasm. The protein localises to the cytoskeleton. It localises to the cilium axoneme. The protein resides in the flagellum axoneme. Its subcellular location is the microtubule organizing center. It is found in the centrosome. The protein localises to the spindle. It localises to the spindle pole. In terms of biological role, microtubule inner protein (MIP) part of the dynein-decorated doublet microtubules (DMTs) in cilia axoneme, which is required for motile cilia beating. Microtubule-associated protein which regulates cell division and neuronal migration during cortical development. Necessary for radial and tangential cell migration during brain development, possibly acting as a regulator of cell morphology and process formation during migration. May enhance calcium influx through CACNA1E and stimulate programmed cell death. The sequence is that of EF-hand domain-containing protein 1 from Homo sapiens (Human).